Reading from the N-terminus, the 236-residue chain is Large ribosomal subunit protein uL2 (236 aa).

A disordered region spans residues 198–236; sequence DHPFGGGGRQHPGRPKTVSRGTPPGRKVGSIAARRTGKR.

This sequence belongs to the universal ribosomal protein uL2 family. In terms of assembly, part of the 50S ribosomal subunit. Forms a bridge to the 30S subunit in the 70S ribosome.

One of the primary rRNA binding proteins. Required for association of the 30S and 50S subunits to form the 70S ribosome, for tRNA binding and peptide bond formation. It has been suggested to have peptidyltransferase activity; this is somewhat controversial. Makes several contacts with the 16S rRNA in the 70S ribosome. This Methanothrix thermoacetophila (strain DSM 6194 / JCM 14653 / NBRC 101360 / PT) (Methanosaeta thermophila) protein is Large ribosomal subunit protein uL2.